The following is a 153-amino-acid chain: D-aminoacyl-tRNA deacylase (153 aa).

A Gly-cisPro motif, important for rejection of L-amino acids motif is present at residues 137–138 (GP).

This sequence belongs to the DTD family. Homodimer.

The protein localises to the cytoplasm. It carries out the reaction glycyl-tRNA(Ala) + H2O = tRNA(Ala) + glycine + H(+). It catalyses the reaction a D-aminoacyl-tRNA + H2O = a tRNA + a D-alpha-amino acid + H(+). An aminoacyl-tRNA editing enzyme that deacylates mischarged D-aminoacyl-tRNAs. Also deacylates mischarged glycyl-tRNA(Ala), protecting cells against glycine mischarging by AlaRS. Acts via tRNA-based rather than protein-based catalysis; rejects L-amino acids rather than detecting D-amino acids in the active site. By recycling D-aminoacyl-tRNA to D-amino acids and free tRNA molecules, this enzyme counteracts the toxicity associated with the formation of D-aminoacyl-tRNA entities in vivo and helps enforce protein L-homochirality. The chain is D-aminoacyl-tRNA deacylase from Herpetosiphon aurantiacus (strain ATCC 23779 / DSM 785 / 114-95).